Reading from the N-terminus, the 73-residue chain is UPF0352 protein HSM_0097 (73 aa).

It belongs to the UPF0352 family.

The chain is UPF0352 protein HSM_0097 from Histophilus somni (strain 2336) (Haemophilus somnus).